The following is a 695-amino-acid chain: Elongation factor G (695 aa).

The region spanning 10-285 (AKTRNIGIMA…AVIDYLPSPI (276 aa)) is the tr-type G domain. Residues 19–26 (AHIDAGKT), 83–87 (DTPGH), and 137–140 (NKMD) contribute to the GTP site.

The protein belongs to the TRAFAC class translation factor GTPase superfamily. Classic translation factor GTPase family. EF-G/EF-2 subfamily.

Its subcellular location is the cytoplasm. Catalyzes the GTP-dependent ribosomal translocation step during translation elongation. During this step, the ribosome changes from the pre-translocational (PRE) to the post-translocational (POST) state as the newly formed A-site-bound peptidyl-tRNA and P-site-bound deacylated tRNA move to the P and E sites, respectively. Catalyzes the coordinated movement of the two tRNA molecules, the mRNA and conformational changes in the ribosome. This is Elongation factor G from Limosilactobacillus reuteri (strain DSM 20016) (Lactobacillus reuteri).